A 630-amino-acid chain; its full sequence is tRNA uridine 5-carboxymethylaminomethyl modification enzyme MnmG (630 aa).

An FAD-binding site is contributed by 14 to 19 (GGGHAG). Position 282–296 (282–296 (GTRYCPSIEDKVRKF)) interacts with NAD(+).

Belongs to the MnmG family. As to quaternary structure, homodimer. Heterotetramer of two MnmE and two MnmG subunits. Requires FAD as cofactor.

Its subcellular location is the cytoplasm. In terms of biological role, NAD-binding protein involved in the addition of a carboxymethylaminomethyl (cmnm) group at the wobble position (U34) of certain tRNAs, forming tRNA-cmnm(5)s(2)U34. The protein is tRNA uridine 5-carboxymethylaminomethyl modification enzyme MnmG of Treponema pallidum (strain Nichols).